The chain runs to 541 residues: Cytochrome P450 monooxygenase claU (541 aa).

Residues 12-32 (VIDTLVILFSTWAFLGLIRVI) traverse the membrane as a helical segment. A heme-binding site is contributed by Cys-480.

This sequence belongs to the cytochrome P450 family. Heme is required as a cofactor.

The protein localises to the membrane. Its pathway is secondary metabolite biosynthesis; terpenoid biosynthesis. Its function is as follows. Cytochrome P450 monooxygenase; part of the gene cluster that mediates the biosynthesis of clavilactone A, a meroterpenoid that features a unique benzo-fused ten-membered carbocyclic ring unit with an alpha,beta-epoxy-gamma-lactone moiety, forming an intriguing 10/5/3 tricyclic nested skeleton. Cytochrome P450 monooxygenases claO, claP, claQ, claU, and claW are close orthologs, suggesting that a redundant function or pseudogenes are present in the cla cluster. These monoxygenases are not involved in clavilactone A biosynthesis nor its modification. ClaR, ClaS and ClaT are sufficient to produce clavilactone A. The biosynthesis begins with the prenyltransferase claS that transfers geranyl pyrophosphate (GPP) to hydroquinone to produces geranylhydroquinone. The cytochrome P450 monooxygenase claR then catalyzes the diradical coupling reaction between the intramolecular hydroquinone and allyl moieties to form the benzo-fused ten-membered carbocyclic ring unit of wigantol. Finally the cytochrome P450 monooxygenase claT exquisitely and stereoselectively assembles the alpha,beta-epoxy-gamma-lactone moiety, producing clavilactone A via arnebinol A. The chain is Cytochrome P450 monooxygenase claU from Ampulloclitocybe clavipes (Club foot).